We begin with the raw amino-acid sequence, 89 residues long: Small ribosomal subunit protein uS15 (89 aa).

It belongs to the universal ribosomal protein uS15 family. In terms of assembly, part of the 30S ribosomal subunit. Forms a bridge to the 50S subunit in the 70S ribosome, contacting the 23S rRNA.

In terms of biological role, one of the primary rRNA binding proteins, it binds directly to 16S rRNA where it helps nucleate assembly of the platform of the 30S subunit by binding and bridging several RNA helices of the 16S rRNA. Functionally, forms an intersubunit bridge (bridge B4) with the 23S rRNA of the 50S subunit in the ribosome. This Janthinobacterium sp. (strain Marseille) (Minibacterium massiliensis) protein is Small ribosomal subunit protein uS15.